Reading from the N-terminus, the 156-residue chain is ATP synthase subunit b (156 aa).

A helical membrane pass occupies residues 11–31; it reads AIAFVLFVLFCMKYIWPPIMA.

Belongs to the ATPase B chain family. F-type ATPases have 2 components, F(1) - the catalytic core - and F(0) - the membrane proton channel. F(1) has five subunits: alpha(3), beta(3), gamma(1), delta(1), epsilon(1). F(0) has three main subunits: a(1), b(2) and c(10-14). The alpha and beta chains form an alternating ring which encloses part of the gamma chain. F(1) is attached to F(0) by a central stalk formed by the gamma and epsilon chains, while a peripheral stalk is formed by the delta and b chains.

The protein resides in the cell inner membrane. In terms of biological role, f(1)F(0) ATP synthase produces ATP from ADP in the presence of a proton or sodium gradient. F-type ATPases consist of two structural domains, F(1) containing the extramembraneous catalytic core and F(0) containing the membrane proton channel, linked together by a central stalk and a peripheral stalk. During catalysis, ATP synthesis in the catalytic domain of F(1) is coupled via a rotary mechanism of the central stalk subunits to proton translocation. Component of the F(0) channel, it forms part of the peripheral stalk, linking F(1) to F(0). This Yersinia enterocolitica serotype O:8 / biotype 1B (strain NCTC 13174 / 8081) protein is ATP synthase subunit b.